A 288-amino-acid polypeptide reads, in one-letter code: Ribosomal RNA small subunit methyltransferase A (288 aa).

Asn37, Leu39, Gly64, Glu86, Asp112, and Asn131 together coordinate S-adenosyl-L-methionine.

It belongs to the class I-like SAM-binding methyltransferase superfamily. rRNA adenine N(6)-methyltransferase family. RsmA subfamily.

It is found in the cytoplasm. It carries out the reaction adenosine(1518)/adenosine(1519) in 16S rRNA + 4 S-adenosyl-L-methionine = N(6)-dimethyladenosine(1518)/N(6)-dimethyladenosine(1519) in 16S rRNA + 4 S-adenosyl-L-homocysteine + 4 H(+). Specifically dimethylates two adjacent adenosines (A1518 and A1519) in the loop of a conserved hairpin near the 3'-end of 16S rRNA in the 30S particle. May play a critical role in biogenesis of 30S subunits. The sequence is that of Ribosomal RNA small subunit methyltransferase A from Rhodospirillum rubrum (strain ATCC 11170 / ATH 1.1.1 / DSM 467 / LMG 4362 / NCIMB 8255 / S1).